Reading from the N-terminus, the 504-residue chain is Amidophosphoribosyltransferase (504 aa).

Cys-2 acts as the Nucleophile in catalysis. One can recognise a Glutamine amidotransferase type-2 domain in the interval 2-235; the sequence is CGIVGIVSQS…PGEAIYVTFE (234 aa). Thr-305, Asp-367, and Asp-368 together coordinate Mg(2+).

In the C-terminal section; belongs to the purine/pyrimidine phosphoribosyltransferase family. Mg(2+) is required as a cofactor.

The enzyme catalyses 5-phospho-beta-D-ribosylamine + L-glutamate + diphosphate = 5-phospho-alpha-D-ribose 1-diphosphate + L-glutamine + H2O. The protein operates within purine metabolism; IMP biosynthesis via de novo pathway; N(1)-(5-phospho-D-ribosyl)glycinamide from 5-phospho-alpha-D-ribose 1-diphosphate: step 1/2. In terms of biological role, catalyzes the formation of phosphoribosylamine from phosphoribosylpyrophosphate (PRPP) and glutamine. In Pasteurella multocida (strain Pm70), this protein is Amidophosphoribosyltransferase.